We begin with the raw amino-acid sequence, 963 residues long: Trehalose synthase (963 aa).

Residue aspartate 60 coordinates substrate. Asparagine 100 contacts Ca(2+). Residues histidine 101 and glutamine 165 each contribute to the substrate site. Residue aspartate 167 participates in Ca(2+) binding. Arginine 195 lines the substrate pocket. Aspartate 197 acts as the Nucleophile in catalysis. Positions 201, 202, and 204 each coordinate Ca(2+). The Proton donor role is filled by glutamate 240. Positions 305 and 306 each coordinate substrate.

It belongs to the glycosyl hydrolase 13 family. TreS subfamily.

The catalysed reaction is D-maltose = alpha,alpha-trehalose. Catalyzes the reversible interconversion of maltose and alpha,alpha-trehalose by transglucosylation. In Thermus thermophilus, this protein is Trehalose synthase (treS).